Here is a 181-residue protein sequence, read N- to C-terminus: Anthrone oxygenase encC (181 aa).

A run of 4 helical transmembrane segments spans residues 1-21 (MASV…WLSG), 65-81 (QIAA…AWCA), 88-108 (LLYG…LLFM), and 153-173 (FLAG…LFAA).

It belongs to the anthrone oxygenase family. In terms of tissue distribution, endocrocin is specifically produced in conidia.

Its subcellular location is the membrane. Anthrone oxygenase; part of the gene cluster that mediates the biosynthesis of endocrocin, a simple anthraquinone interesting for many biotechnological applications. The pathway begins with the synthesis of atrochrysone thioester by the polyketide synthase (PKS) encA. The atrochrysone carboxyl ACP thioesterase encB then breaks the thioester bond and releases the atrochrysone carboxylic acid from encA. The atrochrysone carboxylic acid is then converted to endocrocin anthrone which is further oxidized into endocrocin by the anthrone oxygenase encC. The exact function of encD has not been identified yet, but it negatively regulates endocrocin production, likely through the modification of endocrocin itself. The polypeptide is Anthrone oxygenase encC (Aspergillus fumigatus (strain ATCC MYA-4609 / CBS 101355 / FGSC A1100 / Af293) (Neosartorya fumigata)).